A 312-amino-acid polypeptide reads, in one-letter code: Protein atonal (312 aa).

2 disordered regions span residues 136-174 and 220-248; these read SNVG…TAAA and NDGS…GKQI. Positions 162 to 174 are enriched in low complexity; the sequence is PSTTATSTPTAAA. The region spanning 255–307 is the bHLH domain; that stretch reads KRRLAANARERRRMQNLNQAFDRLRQYLPCLGNDRQLSKHETLQMAQTYISAL.

As to quaternary structure, efficient DNA binding requires dimerization with another bHLH protein. Forms a heterodimer with Daughterless. Proneural clusters and sense organ precursors of the chordotonal organs, optic furrow of the eye-antennal disk and developing brain lobe.

The protein resides in the nucleus. In terms of biological role, developmental protein involved in neurogenesis. Required for the formation of chordotonal organs and photoreceptors. Seems to bind to E boxes. Specifically required for the photoreceptor R8 selection. This Drosophila melanogaster (Fruit fly) protein is Protein atonal (ato).